Reading from the N-terminus, the 64-residue chain is Small hydrophobic protein (64 aa).

The Intravirion portion of the chain corresponds to 1-20 (MENTSITIEFSSKFWPYFTL). Residues 6-15 (ITIEFSSKFW) are interaction with host BCAP31. The chain crosses the membrane as a helical; Signal-anchor for type II membrane protein span at residues 21–44 (IHMITTIISLLIIISIMIAILNKL). Residues 38–43 (IAILNK) are interaction with small-molecule inhibitor. The Virion surface segment spans residues 45–64 (CEYNVFHNKTFELPRARVNT). Asparagine 52 carries an N-linked (GlcNAc...) asparagine; by host glycan.

The protein belongs to the orthopneumovirus small hydrophobic protein family. In terms of assembly, homopentamer forming a funnel-like pore. Interacts with glycoprotein G; this interaction occurs on the surface of virion particles and infected cells. Interacts with host BCAP31 (via C-terminus); this interaction is direct. Post-translationally, four species of SH have been detected in infected cell cytoplasm: a 7.5 kDa non-glycosylated form (SH0), a 13-15 kDa form that contains one or two N-linked carbohydrate side chains of the high-mannose type (SHg), a 21-30 kDa polylactosaminoglycan-modified form of the protein (SHp), and the isoform generated by alternative translational initiation. Of these different forms, SH0 is by far the most abundant protein detected during virus infection. Tyrosine phosphorylated.

The protein resides in the virion membrane. It localises to the host cell membrane. It is found in the host Golgi apparatus membrane. Its subcellular location is the host endoplasmic reticulum membrane. Channel activity is inhibited by copper. Also inhibited by small-molecule pyronin B. Viroporin that forms a homopentameric ion channel displaying low ion selectivity. May play a role in virus morphogenesis and pathogenicity at various stages of the viral life cycle. Accumulates at the membrane of the Golgi apparatus in infected cells and may facilitate virus release by modifying the secretory pathway. May enhance host membrane permeability and disrupt cellular ion homeostasis, which can be sensed as damage-associated molecular patterns/danger signals, triggering NLRP3 inflammasome activation and inflammatory immune response. Also inhibits host TNFA-mediated signaling pathway and may delay apoptosis, allowing time for the virus to replicate. This is Small hydrophobic protein from Homo sapiens (Human).